The following is a 295-amino-acid chain: 33 kDa chaperonin (295 aa).

Disulfide bonds link Cys-238–Cys-240 and Cys-271–Cys-274.

Belongs to the HSP33 family. Post-translationally, under oxidizing conditions two disulfide bonds are formed involving the reactive cysteines. Under reducing conditions zinc is bound to the reactive cysteines and the protein is inactive.

It is found in the cytoplasm. Its function is as follows. Redox regulated molecular chaperone. Protects both thermally unfolding and oxidatively damaged proteins from irreversible aggregation. Plays an important role in the bacterial defense system toward oxidative stress. This chain is 33 kDa chaperonin, found in Clostridium botulinum (strain Alaska E43 / Type E3).